A 129-amino-acid chain; its full sequence is F(420)H(2) dehydrogenase subunit A (129 aa).

3 helical membrane passes run 9 to 29 (IIDS…MPPM), 64 to 84 (FNVE…EVLF), and 95 to 115 (HGIT…LLFG).

The protein belongs to the complex I subunit 3 family. The FPO complex is composed of at least 13 different subunits. FpoA, FpoH, FpoJ, FpoK, FpoL, FpoM and FpoN proteins constitute the membrane sector of the complex.

It localises to the cell membrane. The catalysed reaction is methanophenazine + reduced coenzyme F420-(gamma-L-Glu)(n) = dihydromethanophenazine + oxidized coenzyme F420-(gamma-L-Glu)(n) + H(+). Functionally, component of the F(420)H(2) dehydrogenase (FPO complex) which is part of the energy-conserving F(420)H(2):heterodisulfide oxidoreductase system. The membrane-bound electron transfer system of the complex plays an important role in the metabolism of methylotrophic methanogens when the organisms grow on methanol or methylamines. Catalyzes the oxidation of methanophenazine to dihydromethanophenazine. It shuttles electrons from F(420)H(2), via FAD and iron-sulfur (Fe-S) centers, to methanophenazine (an electron carrier in the membrane). It couples the redox reaction to proton translocation (for every two electrons transferred, two hydrogen ions are translocated across the cytoplasmic membrane), and thus conserves the redox energy in a proton gradient. It also catalyzes the oxidation of F(420)H(2) with quinones such as 2,3-dimethyl-1,4-naphthoquinone, 2-methyl-1,4-naphthoquinone and tetramethyl-p-benzoquinone. The polypeptide is F(420)H(2) dehydrogenase subunit A (fpoA) (Methanosarcina mazei (strain ATCC BAA-159 / DSM 3647 / Goe1 / Go1 / JCM 11833 / OCM 88) (Methanosarcina frisia)).